We begin with the raw amino-acid sequence, 1341 residues long: DNA-directed RNA polymerase subunit beta (1341 aa).

It belongs to the RNA polymerase beta chain family. The RNAP catalytic core consists of 2 alpha, 1 beta, 1 beta' and 1 omega subunit. When a sigma factor is associated with the core the holoenzyme is formed, which can initiate transcription.

It carries out the reaction RNA(n) + a ribonucleoside 5'-triphosphate = RNA(n+1) + diphosphate. In terms of biological role, DNA-dependent RNA polymerase catalyzes the transcription of DNA into RNA using the four ribonucleoside triphosphates as substrates. This chain is DNA-directed RNA polymerase subunit beta, found in Blochmanniella pennsylvanica (strain BPEN).